The following is an 84-amino-acid chain: Large ribosomal subunit protein bL27 (84 aa).

The interval 1–21 is disordered; sequence MAHKKGVGSSRNGRDSDGQRL.

It belongs to the bacterial ribosomal protein bL27 family.

This chain is Large ribosomal subunit protein bL27, found in Trichlorobacter lovleyi (strain ATCC BAA-1151 / DSM 17278 / SZ) (Geobacter lovleyi).